Consider the following 447-residue polypeptide: Glutamyl-tRNA reductase (447 aa).

Residues 49 to 52 (TCNR), S109, 114 to 116 (EQQ), and Q120 contribute to the substrate site. C50 (nucleophile) is an active-site residue. Position 189 to 194 (189 to 194 (GAGSMG)) interacts with NADP(+).

Belongs to the glutamyl-tRNA reductase family. In terms of assembly, homodimer.

It carries out the reaction (S)-4-amino-5-oxopentanoate + tRNA(Glu) + NADP(+) = L-glutamyl-tRNA(Glu) + NADPH + H(+). The protein operates within porphyrin-containing compound metabolism; protoporphyrin-IX biosynthesis; 5-aminolevulinate from L-glutamyl-tRNA(Glu): step 1/2. In terms of biological role, catalyzes the NADPH-dependent reduction of glutamyl-tRNA(Glu) to glutamate 1-semialdehyde (GSA). The sequence is that of Glutamyl-tRNA reductase from Mycobacterium sp. (strain JLS).